The primary structure comprises 619 residues: Glucokinase regulatory protein (619 aa).

2 SIS domains span residues 90–283 and 319–498; these read VQEV…AESN and TATS…LRGK. 107–109 serves as a coordination point for keto-D-fructose 6-phosphate; it reads CGT. Beta-D-fructose 1-phosphate contacts are provided by residues 109–110, Glu153, 179–181, and Glu347; these read TS and SCG. Keto-D-fructose 6-phosphate is bound by residues 179-183 and Glu347; that span reads SCGLS. Residues 462 to 464 form an essential for interaction with GCK region; that stretch reads ILF. Lys513 contacts keto-D-fructose 6-phosphate. Lys513 lines the beta-D-fructose 1-phosphate pocket.

Belongs to the GCKR family. As to quaternary structure, interacts (fructose 6-phosphate bound form) with gck.

It localises to the nucleus. The protein localises to the cytoplasm. The protein resides in the mitochondrion. Regulates glucokinase (gck) by forming an inactive complex with this enzyme. The affinity of gckr for gck is modulated by fructose metabolites: gckr with bound fructose 6-phosphate has increased affinity for gck, while gckr with bound fructose 1-phosphate has strongly decreased affinity for gck and does not inhibit gck activity. The sequence is that of Glucokinase regulatory protein from Xenopus laevis (African clawed frog).